The primary structure comprises 544 residues: Methionine--tRNA ligase (544 aa).

The short motif at 10–20 (PYANGSLHLGH) is the 'HIGH' region element. Residues Cys141, Cys144, Cys153, and Cys156 each coordinate Zn(2+). The 'KMSKS' region motif lies at 329 to 333 (KLSTS). Thr332 provides a ligand contact to ATP.

Belongs to the class-I aminoacyl-tRNA synthetase family. MetG type 1 subfamily. In terms of assembly, monomer. The cofactor is Zn(2+).

It is found in the cytoplasm. It carries out the reaction tRNA(Met) + L-methionine + ATP = L-methionyl-tRNA(Met) + AMP + diphosphate. Is required not only for elongation of protein synthesis but also for the initiation of all mRNA translation through initiator tRNA(fMet) aminoacylation. This chain is Methionine--tRNA ligase, found in Bacillus cereus (strain AH187).